A 430-amino-acid chain; its full sequence is MRVYTADVKPEMEGQKVTLYGWVHEVRDLGGLVFILLRDREGIVQITLPRKFVSKQVFKLAKKIRRESVIAVTGEVRREEKAPGGVEIIPESIEVLNEADAPLPLEVTEKVPAELDTRLDHRFMDLRRPRVQAIFRIRHQVMQSVREFLSEEGFIEVHTPKIVSTATEGGTELFPISYFEKEAFLNQSPQLYKQVLMAAGFEKVFEIGPIFRAEEHNTTRHLNEAISIDIEMSFTDHNGVMDVLERLVQRVYEDVAEKCERYLGWLEVSLEIPELPFPRITYDEAREIAARKGEEIPWGEDLSTNALKLVGEEMGGLYFITDWPTESKPFYAMPYEDRPEISKSFDLMHGWLELSSGAQRIHLYDMLVESIKAKGMEPESFGFYLEAFRYGMPPHAGWGLGAERLIMSMLGLKNVREAVLFPRDRHRLVP.

L-aspartate is bound at residue E168. Residues 190–193 are aspartate; that stretch reads QLYK. R212 lines the L-aspartate pocket. ATP is bound by residues 212-214, 220-222, and E353; these read RAE and RHL. Positions 353 and 356 each coordinate Mg(2+). Residues S356 and R360 each contribute to the L-aspartate site. 401–404 contributes to the ATP binding site; the sequence is GAER.

The protein belongs to the class-II aminoacyl-tRNA synthetase family. Type 2 subfamily. As to quaternary structure, homodimer. It depends on Mg(2+) as a cofactor.

Its subcellular location is the cytoplasm. The enzyme catalyses tRNA(Asx) + L-aspartate + ATP = L-aspartyl-tRNA(Asx) + AMP + diphosphate. Functionally, aspartyl-tRNA synthetase with relaxed tRNA specificity since it is able to aspartylate not only its cognate tRNA(Asp) but also tRNA(Asn). Reaction proceeds in two steps: L-aspartate is first activated by ATP to form Asp-AMP and then transferred to the acceptor end of tRNA(Asp/Asn). The polypeptide is Aspartate--tRNA(Asp/Asn) ligase (Archaeoglobus fulgidus (strain ATCC 49558 / DSM 4304 / JCM 9628 / NBRC 100126 / VC-16)).